The primary structure comprises 255 residues: Imidazole glycerol phosphate synthase subunit HisF (255 aa).

Residues D11 and D130 contribute to the active site.

Belongs to the HisA/HisF family. In terms of assembly, heterodimer of HisH and HisF.

Its subcellular location is the cytoplasm. The catalysed reaction is 5-[(5-phospho-1-deoxy-D-ribulos-1-ylimino)methylamino]-1-(5-phospho-beta-D-ribosyl)imidazole-4-carboxamide + L-glutamine = D-erythro-1-(imidazol-4-yl)glycerol 3-phosphate + 5-amino-1-(5-phospho-beta-D-ribosyl)imidazole-4-carboxamide + L-glutamate + H(+). Its pathway is amino-acid biosynthesis; L-histidine biosynthesis; L-histidine from 5-phospho-alpha-D-ribose 1-diphosphate: step 5/9. IGPS catalyzes the conversion of PRFAR and glutamine to IGP, AICAR and glutamate. The HisF subunit catalyzes the cyclization activity that produces IGP and AICAR from PRFAR using the ammonia provided by the HisH subunit. The polypeptide is Imidazole glycerol phosphate synthase subunit HisF (Campylobacter jejuni (strain RM1221)).